Consider the following 260-residue polypeptide: MFDIGVNLTSSQFEKDREQVVIRAKQAGVSGILITGTNAQESQQAMLLAQAYPDYCWSTAGVHPHDASQWNDAVAEQIHHMASADCVVAIGECGLDFNRNFSTPEEQERAFSAQLAIAAERSMPVFLHCRDAHSRFISFLTPWLNRLPAAVVHCFTGNRHELDECLAAGLMVGITGWVCDERRGLELRALLPHIPADRLLVETDAPYLLPRDLRPKPASRRNEPCYLPHIIRQIAEWRGEDATWLGQTTDENARRVFRLA.

A divalent metal cation is bound by residues E92, H128, and H153.

This sequence belongs to the metallo-dependent hydrolases superfamily. TatD-type hydrolase family. TatD subfamily. Monomer. The cofactor is Mg(2+).

The protein localises to the cytoplasm. Its function is as follows. 3'-5' exonuclease that prefers single-stranded DNA and RNA. May play a role in the H(2)O(2)-induced DNA damage repair. The chain is 3'-5' ssDNA/RNA exonuclease TatD from Pectobacterium carotovorum subsp. carotovorum (strain PC1).